Consider the following 2290-residue polypeptide: Autophagy-related protein 2 (2290 aa).

The 90-residue stretch at 10–99 (WCKVMLQRYM…MCIEDLQLTF (90 aa)) folds into the Chorein N-terminal domain. Positions 829-1549 (DSMMKSVSAD…PNRDHSAFVV (721 aa)) are required for epg-6 binding. Disordered regions lie at residues 1678-1727 (IGSK…LGDL), 1805-1851 (DDLF…DLTG), 1898-1919 (SETE…PARN), and 1967-2003 (EHGN…ERNK). A compositionally biased stretch (low complexity) spans 1681-1692 (KKTTPKTSVSSS). The span at 1714–1723 (RPSPVQPPTP) shows a compositional bias: pro residues. Residues 1810–1830 (QSYSSSSSETESESSAPQSSQ) show a composition bias toward low complexity. Residues 1972-2011 (LDSIDNEDDNEKQKIEEEMEEDEKEEEEERNKEIQEAVER) are a coiled coil. The segment covering 1988–1999 (EEMEEDEKEEEE) has biased composition (acidic residues).

The protein belongs to the ATG2 family. Interacts with epg-6; the interaction is direct.

It localises to the preautophagosomal structure membrane. The protein resides in the lipid droplet. Its subcellular location is the endoplasmic reticulum membrane. The protein localises to the cytoplasm. The catalysed reaction is a 1,2-diacyl-sn-glycero-3-phospho-L-serine(in) = a 1,2-diacyl-sn-glycero-3-phospho-L-serine(out). It catalyses the reaction a 1,2-diacyl-sn-glycero-3-phosphoethanolamine(in) = a 1,2-diacyl-sn-glycero-3-phosphoethanolamine(out). Lipid transfer protein involved in autophagosome assembly and in the distribution of atg-9 and atg-13 during the autophagy-mediated degradation of protein aggregates. Tethers the edge of the isolation membrane (IM) to the endoplasmic reticulum (ER) and mediates direct lipid transfer from ER to IM for IM expansion. Binds to the ER exit site (ERES), which is the membrane source for autophagosome formation, and extracts phospholipids from the membrane source to the IM for membrane expansion. Involved in autophagy-mediated degradation of ribosomal RNA and ribosomal proteins in lysosomes, which is essential for maintaining nucleotide homeostasis. The polypeptide is Autophagy-related protein 2 (Caenorhabditis elegans).